Reading from the N-terminus, the 93-residue chain is DNA/RNA-binding protein Alba (93 aa).

Position 11 is an N6-acetyllysine (K11).

It belongs to the histone-like Alba family. Acetylated. Acetylation at Lys-11 decreases DNA-binding affinity.

Its subcellular location is the cytoplasm. It localises to the chromosome. Its function is as follows. Binds double-stranded DNA tightly but without sequence specificity. Involved in DNA compaction. This is DNA/RNA-binding protein Alba from Pyrococcus horikoshii (strain ATCC 700860 / DSM 12428 / JCM 9974 / NBRC 100139 / OT-3).